Here is a 62-residue protein sequence, read N- to C-terminus: UPF0337 protein XAC0100 (62 aa).

This sequence belongs to the UPF0337 (CsbD) family.

This is UPF0337 protein XAC0100 from Xanthomonas axonopodis pv. citri (strain 306).